We begin with the raw amino-acid sequence, 405 residues long: Transposase from transposon Tn1545 (405 aa).

Residues 79-163 enclose the Core-binding (CB) domain; the sequence is GKKMTLCQLY…SLKASFYIAI (85 aa). The Tyr recombinase domain maps to 186 to 392; that stretch reads VPKTVLTEEQ…TFDSAMAEMK (207 aa). Catalysis depends on residues Arg225, Lys264, His343, Arg346, and His369. Residue Tyr379 is the O-(3'-phospho-DNA)-tyrosine intermediate of the active site.

It belongs to the 'phage' integrase family.

This chain is Transposase from transposon Tn1545 (int), found in Streptococcus agalactiae serotype V (strain ATCC BAA-611 / 2603 V/R).